Consider the following 231-residue polypeptide: uncharacterized protein (231 aa).

This sequence belongs to the DnaA family. HdA subfamily.

This is an uncharacterized protein from Haemophilus influenzae (strain ATCC 51907 / DSM 11121 / KW20 / Rd).